Consider the following 169-residue polypeptide: Lutropin/choriogonadotropin subunit beta (169 aa).

The N-terminal stretch at 1 to 20 is a signal peptide; it reads METLQGLLLWMLLSVGGVWA. Cystine bridges form between C29-C77, C43-C92, C46-C130, C54-C108, C58-C110, and C113-C120. N33 is a glycosylation site (N-linked (GlcNAc...) asparagine). A disordered region spans residues 131-169; it reads APQASSSSKDPPSQPLTSTSTPTPGASRRSSHPLPIKTS. 2 O-linked (GalNAc...) serine glycosylation sites follow: S138 and S143. Residues 145-158 show a composition bias toward low complexity; sequence PLTSTSTPTPGASR. An O-linked (GalNAc...) threonine glycan is attached at T147. O-linked (GalNAc...) serine glycosylation occurs at S148. An O-linked (GalNAc...) threonine glycan is attached at T149. Residue S150 is glycosylated (O-linked (GalNAc...) serine). T151 and T153 each carry an O-linked (GalNAc...) threonine glycan. S157, S160, S161, and S169 each carry an O-linked (GalNAc...) serine glycan.

This sequence belongs to the glycoprotein hormones subunit beta family. Heterodimer of a common alpha chain and a unique beta chain which confers biological specificity to thyrotropin, lutropin, follitropin and gonadotropin. Post-translationally, microheterogeneity at Asn-33. O-glycosylation appears to be responsible for the beta subunit contribution to the difference in LH-receptor binding activity between LSH-B and CG-B.

It localises to the secreted. Its function is as follows. Promotes spermatogenesis and ovulation by stimulating the testes and ovaries to synthesize steroids. This is Lutropin/choriogonadotropin subunit beta (LHB) from Equus caballus (Horse).